The following is a 547-amino-acid chain: Heme-binding protein A (547 aa).

The N-terminal stretch at Met-1–Ala-18 is a signal peptide. Cys-19 carries the N-palmitoyl cysteine lipid modification. Residue Cys-19 is the site of S-diacylglycerol cysteine attachment.

This sequence belongs to the bacterial solute-binding protein 5 family.

Its subcellular location is the cell inner membrane. Functionally, important role in heme acquisition or metabolism. This chain is Heme-binding protein A (hbpA), found in Haemophilus influenzae (strain ATCC 51907 / DSM 11121 / KW20 / Rd).